The sequence spans 544 residues: Chaperonin GroEL (544 aa).

ATP-binding positions include 30–33 (TLGP), K51, 87–91 (DGTTT), G415, and D495.

This sequence belongs to the chaperonin (HSP60) family. As to quaternary structure, forms a cylinder of 14 subunits composed of two heptameric rings stacked back-to-back. Interacts with the co-chaperonin GroES.

The protein resides in the cytoplasm. It carries out the reaction ATP + H2O + a folded polypeptide = ADP + phosphate + an unfolded polypeptide.. Together with its co-chaperonin GroES, plays an essential role in assisting protein folding. The GroEL-GroES system forms a nano-cage that allows encapsulation of the non-native substrate proteins and provides a physical environment optimized to promote and accelerate protein folding. The polypeptide is Chaperonin GroEL (Neisseria gonorrhoeae (strain ATCC 700825 / FA 1090)).